A 1794-amino-acid chain; its full sequence is Non-reducing polyketide synthase nscA (1794 aa).

Positions 19–256 (DLKDLFRRLH…PLPVYDGLCH (238 aa)) are N-terminal acylcarrier protein transacylase domain (SAT). Residues 389–822 (ASKLAIVGMA…GGNTTVLLED (434 aa)) form the Ketosynthase family 3 (KS3) domain. A compositionally biased stretch (basic and acidic residues) spans 428–440 (DRFDLNTHYDPTG). The disordered stretch occupies residues 428–448 (DRFDLNTHYDPTGKTENATQT). Active-site for beta-ketoacyl synthase activity residues include Cys-562, His-697, and His-740. The interval 927 to 1230 (TFTGQGAYYS…SVISSCRRNE (304 aa)) is malonyl-CoA:ACP transacylase (MAT) domain. The segment at 1314–1633 (TSLVHQITTE…RLLMDRFFSP (320 aa)) is product template (PT) domain. An N-terminal hotdog fold region spans residues 1318–1454 (HQITTETVEA…CVVRFEDPAA (137 aa)). In terms of domain architecture, PKS/mFAS DH spans 1318 to 1628 (HQITTETVEA…FRRVPRLLMD (311 aa)). Catalysis depends on His-1350, which acts as the Proton acceptor; for dehydratase activity. Positions 1482–1628 (ASKLSKPLAY…FRRVPRLLMD (147 aa)) are C-terminal hotdog fold. Catalysis depends on Asp-1539, which acts as the Proton donor; for dehydratase activity. Residues 1637–1719 (SHTEKQLQET…ATSDRGDSTD (83 aa)) are disordered. Residues 1644 to 1655 (QETAPSATNVKK) are compositionally biased toward polar residues. A Carrier domain is found at 1717-1794 (STDAGVVGQC…EMTAWLEEYC (78 aa)). Ser-1754 carries the post-translational modification O-(pantetheine 4'-phosphoryl)serine.

It depends on pantetheine 4'-phosphate as a cofactor.

It functions in the pathway secondary metabolite biosynthesis. In terms of biological role, non-reducing polyketide synthase; part of the gene cluster that mediates the biosynthesis of neosartoricin, a prenylated anthracenone that exhibits T-cell antiproliferative activity, suggestive of a physiological role as an immunosuppressive agent. The non-reducing polyketide synthase nscA probably synthesizes and cyclizes the decaketide backbone. The hydrolase nscB then mediates the product release through hydrolysis followed by spontaneous decarboxylation. The prenyltransferase nscD catalyzes the addition of the dimethylallyl group to the aromatic C5. The FAD-dependent monooxygenase nscC is then responsible for the stereospecific hydroxylation at C2. There is no gene encoding O-acetyltransferase in the nsc gene cluster; thus, the last step of 2-O-acetylation leading to neosartoricin may be catalyzed by an unidentified O-acetyltransferase. This chain is Non-reducing polyketide synthase nscA, found in Aspergillus fumigatus (strain ATCC MYA-4609 / CBS 101355 / FGSC A1100 / Af293) (Neosartorya fumigata).